Consider the following 69-residue polypeptide: Cytochrome c oxidase subunit 8A, mitochondrial (69 aa).

Residues 1–25 constitute a mitochondrion transit peptide; that stretch reads MSVLTPLLLRGLTGSARRLPVPRAQ. The SIFI-degron motif lies at 2–19; the sequence is SVLTPLLLRGLTGSARRL. Residues 26 to 36 lie on the Mitochondrial matrix side of the membrane; it reads VHSMPPEQKLG. A helical membrane pass occupies residues 37 to 60; the sequence is VLELAIGFTSCLVTFLLPAGWILS. Over 61–69 the chain is Mitochondrial intermembrane; it reads HLDSYKKRG.

The protein belongs to the cytochrome c oxidase VIII family. As to quaternary structure, component of the cytochrome c oxidase (complex IV, CIV), a multisubunit enzyme composed of 14 subunits. The complex is composed of a catalytic core of 3 subunits MT-CO1, MT-CO2 and MT-CO3, encoded in the mitochondrial DNA, and 11 supernumerary subunits COX4I, COX5A, COX5B, COX6A, COX6B, COX6C, COX7A, COX7B, COX7C, COX8 and NDUFA4, which are encoded in the nuclear genome. The complex exists as a monomer or a dimer and forms supercomplexes (SCs) in the inner mitochondrial membrane with NADH-ubiquinone oxidoreductase (complex I, CI) and ubiquinol-cytochrome c oxidoreductase (cytochrome b-c1 complex, complex III, CIII), resulting in different assemblies (supercomplex SCI(1)III(2)IV(1) and megacomplex MCI(2)III(2)IV(2)). Post-translationally, in response to mitochondrial stress, the precursor protein is ubiquitinated by the SIFI complex in the cytoplasm before mitochondrial import, leading to its degradation. Within the SIFI complex, UBR4 initiates ubiquitin chain that are further elongated or branched by KCMF1.

The protein localises to the mitochondrion inner membrane. Its pathway is energy metabolism; oxidative phosphorylation. Functionally, component of the cytochrome c oxidase, the last enzyme in the mitochondrial electron transport chain which drives oxidative phosphorylation. The respiratory chain contains 3 multisubunit complexes succinate dehydrogenase (complex II, CII), ubiquinol-cytochrome c oxidoreductase (cytochrome b-c1 complex, complex III, CIII) and cytochrome c oxidase (complex IV, CIV), that cooperate to transfer electrons derived from NADH and succinate to molecular oxygen, creating an electrochemical gradient over the inner membrane that drives transmembrane transport and the ATP synthase. Cytochrome c oxidase is the component of the respiratory chain that catalyzes the reduction of oxygen to water. Electrons originating from reduced cytochrome c in the intermembrane space (IMS) are transferred via the dinuclear copper A center (CU(A)) of subunit 2 and heme A of subunit 1 to the active site in subunit 1, a binuclear center (BNC) formed by heme A3 and copper B (CU(B)). The BNC reduces molecular oxygen to 2 water molecules using 4 electrons from cytochrome c in the IMS and 4 protons from the mitochondrial matrix. The sequence is that of Cytochrome c oxidase subunit 8A, mitochondrial (COX8A) from Saimiri sciureus (Common squirrel monkey).